The chain runs to 168 residues: MEVYVLRLGHRPERDKRISTHVALTARAFGAKGIYFDTEDKSVFESVRDVVERWGGDFFIKAVSWKKLLREFDGLKVHLTMYGIPLPQKLEEIKRADKVLVVVGAEKVPPEVYELCDLNISIGTQPHSEVAALAVFLDRVLGKVFDISFDDAKIKVIPSERGKRVVSE.

S-adenosyl-L-methionine is bound by residues leucine 79 and 104–108; that span reads GAEKV.

This sequence belongs to the aTrm56 family. Homodimer.

It is found in the cytoplasm. The enzyme catalyses cytidine(56) in tRNA + S-adenosyl-L-methionine = 2'-O-methylcytidine(56) in tRNA + S-adenosyl-L-homocysteine + H(+). In terms of biological role, specifically catalyzes the AdoMet-dependent 2'-O-ribose methylation of cytidine at position 56 in tRNAs. The chain is tRNA (cytidine(56)-2'-O)-methyltransferase from Archaeoglobus fulgidus (strain ATCC 49558 / DSM 4304 / JCM 9628 / NBRC 100126 / VC-16).